Here is an 889-residue protein sequence, read N- to C-terminus: MLSIGAMANIKHTLQKELFLASGERLLSVVTVVKKKDKKPCYLCVVTTAPPVPVVTLCLIKQSEQREGEYKRKRSWQLDEIKWVDGRNEQFETHEFDLQLEKLYKWYALNPHERQNFLAVLNRQIQKSVRGQRAEFRNVPAAWLSEKSPEKVALGRAVQKTQHMDDEEDEEEEAQEFTALTDKEANELGKLFSECDFAIKDAEQFIEQLSRELHDLDGANMQSVLASEQKVLKMMEHIDNAISEADKFENRLDSYEDILGHVKETMEKIGGKNAMIEIANNNNIKLMKELNKVISQLDLPHSQQQALDEPDLKTANGRKAAIAAAQCLQQAMNSDIDPALLRLEAVQDQRKRFEKWKQKFSATVSRFMNNLFIHLGNEIGDMQVTSTELTLPNHSNVHRELTPYTELMHWTKAMDRKTYDGLMRVYTASLSKIYDRDVRNFFNLAKIQVTEKLRNSREDLDMSTSSRKSAVSTIPYGTLGINRDQWGPGVETADRMRFDALLEKVLAELEPIALQEQLFCINFFQMDVISPTTKNTQTTLEMEKAVDMTQSIISGAVSPSGDGVPQKRIDRQINEDVRKLMMGLFGCLEPELVSFIQSFERVDSFYSLYVFVRLTQHVMSAQDTHSFLSMTFASALVQVKRSFDRFMQNQLLSIREAKLHKRSKAILPYVENFENFAQTAEGIFRKSDRRTDMEKWYLQLVNAIFEGIQLHSQEHPKTPVQVVRMENYHHMYALLAQLKVPGLDALKKEAKKCYNDALKAYVTQYFGRPLEKLNQFFEGVQLKVAQGVKETEISYQMAFSKQELRKVIAQYPAREVKKGLENLYKKVEKHLSEEENLLQVVWHAMQEEFIAQYNYLEERIQKCYAGAMINLEFNIQDILAFFSDIARSH.

Phosphoserine is present on residues Ser145 and Ser148. Positions 156–269 (RAVQKTQHMD…GHVKETMEKI (114 aa)) form a coiled coil. Ser456 is modified (phosphoserine).

It belongs to the SEC3 family. The exocyst complex is composed of Sec3/Exoc1, Sec5/Exoc2, Sec6/Exoc3, Sec8/Exoc4, Sec10/Exoc5, Sec15/Exoc6, Exo70/Exoc7 and Exo84/Exoc8.

In terms of biological role, component of the exocyst complex involved in the docking of exocytic vesicles with fusion sites on the plasma membrane. This is Exocyst complex component 1 from Drosophila melanogaster (Fruit fly).